The sequence spans 290 residues: 4-hydroxy-tetrahydrodipicolinate synthase (290 aa).

Thr46 is a binding site for pyruvate. Tyr134 acts as the Proton donor/acceptor in catalysis. Lys163 acts as the Schiff-base intermediate with substrate in catalysis. Val205 is a pyruvate binding site.

It belongs to the DapA family. As to quaternary structure, homotetramer; dimer of dimers.

It is found in the cytoplasm. It carries out the reaction L-aspartate 4-semialdehyde + pyruvate = (2S,4S)-4-hydroxy-2,3,4,5-tetrahydrodipicolinate + H2O + H(+). It functions in the pathway amino-acid biosynthesis; L-lysine biosynthesis via DAP pathway; (S)-tetrahydrodipicolinate from L-aspartate: step 3/4. In terms of biological role, catalyzes the condensation of (S)-aspartate-beta-semialdehyde [(S)-ASA] and pyruvate to 4-hydroxy-tetrahydrodipicolinate (HTPA). This Bacillus subtilis (strain 168) protein is 4-hydroxy-tetrahydrodipicolinate synthase.